We begin with the raw amino-acid sequence, 535 residues long: Inositol 1,4,5-trisphosphate receptor-interacting protein-like 2 (535 aa).

An N-terminal signal peptide occupies residues methionine 1–serine 32. The Extracellular portion of the chain corresponds to serine 33–glycine 43. A helical transmembrane segment spans residues alanine 44 to leucine 64. Residues arginine 65 to proline 535 lie on the Cytoplasmic side of the membrane. Serine 139 carries the post-translational modification Phosphoserine.

This sequence belongs to the ITPRIP family.

It localises to the membrane. This Mus musculus (Mouse) protein is Inositol 1,4,5-trisphosphate receptor-interacting protein-like 2 (Itpripl2).